The following is an 85-amino-acid chain: Phosphocarrier protein HPr (85 aa).

Positions 1 to 85 constitute an HPr domain; it reads MFQQEVTITA…HLVKLMAELE (85 aa). His15 acts as the Pros-phosphohistidine intermediate in catalysis.

The protein belongs to the HPr family.

It localises to the cytoplasm. In terms of biological role, general (non sugar-specific) component of the phosphoenolpyruvate-dependent sugar phosphotransferase system (sugar PTS). This major carbohydrate active-transport system catalyzes the phosphorylation of incoming sugar substrates concomitantly with their translocation across the cell membrane. The phosphoryl group from phosphoenolpyruvate (PEP) is transferred to the phosphoryl carrier protein HPr by enzyme I. Phospho-HPr then transfers it to the PTS EIIA domain. This Escherichia coli O157:H7 protein is Phosphocarrier protein HPr (ptsH).